The primary structure comprises 454 residues: Inner membrane transport protein YajR (454 aa).

Residues 1–14 (MNDYKMTPGERRAT) are Periplasmic-facing. The chain crosses the membrane as a helical span at residues 15-35 (WGLGTVFSLRMLGMFMVLPVL). The Cytoplasmic portion of the chain corresponds to 36–47 (TTYGMALQGASE). Residues 48–68 (ALIGIAIGIYGLTQAVFQIPF) traverse the membrane as a helical segment. Over 69–84 (GLLSDRIGRKPLIVGG) the chain is Periplasmic. A helical transmembrane segment spans residues 85–105 (LAVFAAGSVIAALSDSIWGII). The Cytoplasmic portion of the chain corresponds to 106-137 (LGRALQGSGAIAAAVMALLSDLTREQNRTKAM). Residues 138–158 (AFIGVSFGITFAIAMVLGPII) form a helical membrane-spanning segment. Residues 159–165 (THKLGLH) are Periplasmic-facing. The helical transmembrane segment at 166–186 (ALFWMIAILATTGIALTIWVV) threads the bilayer. At 187-216 (PNSSTHVLNRESGMVKGSFSKVLAEPRLLK) the chain is on the cytoplasmic side. Residues 217-237 (LNFGIMCLHILLMSTFVALPG) form a helical membrane-spanning segment. The Periplasmic segment spans residues 238–252 (QLADAGFPAAEHWKV). Residues 253–273 (YLATMLIAFGSVVPFIIYAEV) traverse the membrane as a helical segment. Over 274–279 (KRKMKQ) the chain is Cytoplasmic. The helical transmembrane segment at 280–300 (VFVFCVGLIVVAEIVLWNAQT) threads the bilayer. Residues 301–306 (QFWQLV) are Periplasmic-facing. A helical transmembrane segment spans residues 307–327 (VGVQLFFVAFNLMEALLPSLI). Topologically, residues 328–340 (SKESPAGYKGTAM) are cytoplasmic. A helical transmembrane segment spans residues 341-361 (GVYSTSQFLGVAIGGSLGGWI). Over 362–363 (NG) the chain is Periplasmic. Residues 364–384 (MFDGQGVFLAGAMLAAVWLTV) form a helical membrane-spanning segment. The Cytoplasmic segment spans residues 385-454 (ASTMKEPPYV…FEIEQAIRQA (70 aa)).

It belongs to the major facilitator superfamily.

It is found in the cell inner membrane. This chain is Inner membrane transport protein YajR (yajR), found in Escherichia coli (strain K12).